Reading from the N-terminus, the 637-residue chain is DNA gyrase subunit B (637 aa).

Residues 421–535 (SEIYIVEGDS…HGYVYIAQPP (115 aa)) form the Toprim domain. Residues Glu427, Asp500, and Asp502 each contribute to the Mg(2+) site.

The protein belongs to the type II topoisomerase GyrB family. Heterotetramer, composed of two GyrA and two GyrB chains. In the heterotetramer, GyrA contains the active site tyrosine that forms a transient covalent intermediate with DNA, while GyrB binds cofactors and catalyzes ATP hydrolysis. Requires Mg(2+) as cofactor. The cofactor is Mn(2+). Ca(2+) serves as cofactor.

It localises to the cytoplasm. The enzyme catalyses ATP-dependent breakage, passage and rejoining of double-stranded DNA.. A type II topoisomerase that negatively supercoils closed circular double-stranded (ds) DNA in an ATP-dependent manner to modulate DNA topology and maintain chromosomes in an underwound state. Negative supercoiling favors strand separation, and DNA replication, transcription, recombination and repair, all of which involve strand separation. Also able to catalyze the interconversion of other topological isomers of dsDNA rings, including catenanes and knotted rings. Type II topoisomerases break and join 2 DNA strands simultaneously in an ATP-dependent manner. This chain is DNA gyrase subunit B, found in Halalkalibacterium halodurans (strain ATCC BAA-125 / DSM 18197 / FERM 7344 / JCM 9153 / C-125) (Bacillus halodurans).